The sequence spans 207 residues: ATP-dependent Clp protease proteolytic subunit (207 aa).

Catalysis depends on Ser111, which acts as the Nucleophile. His136 is a catalytic residue.

Belongs to the peptidase S14 family. Fourteen ClpP subunits assemble into 2 heptameric rings which stack back to back to give a disk-like structure with a central cavity, resembling the structure of eukaryotic proteasomes.

Its subcellular location is the cytoplasm. The catalysed reaction is Hydrolysis of proteins to small peptides in the presence of ATP and magnesium. alpha-casein is the usual test substrate. In the absence of ATP, only oligopeptides shorter than five residues are hydrolyzed (such as succinyl-Leu-Tyr-|-NHMec, and Leu-Tyr-Leu-|-Tyr-Trp, in which cleavage of the -Tyr-|-Leu- and -Tyr-|-Trp bonds also occurs).. Cleaves peptides in various proteins in a process that requires ATP hydrolysis. Has a chymotrypsin-like activity. Plays a major role in the degradation of misfolded proteins. This Pectobacterium atrosepticum (strain SCRI 1043 / ATCC BAA-672) (Erwinia carotovora subsp. atroseptica) protein is ATP-dependent Clp protease proteolytic subunit.